Reading from the N-terminus, the 1409-residue chain is Receptor-type tyrosine-protein phosphatase (1409 aa).

Residues 1-22 (MRINRWIWWATVILLYLRTGLA) form the signal peptide. Residues 23–712 (ADFFRSSEEN…LLDTESSSSG (690 aa)) are Extracellular-facing. The disordered stretch occupies residues 32–53 (NDRKSSDDLDNFNSTKIEPDKP). In terms of domain architecture, Ig-like C2-type spans 159-267 (PTKCDKRDLA…TASASDLDVT (109 aa)). Cys189 and Cys255 form a disulfide bridge. Fibronectin type-III domains are found at residues 276–366 (APRQ…TKQK) and 372–502 (KEED…AQPD). The helical transmembrane segment at 713–733 (FGIFMKIILPFLLFLAFATGV) threads the bilayer. Topologically, residues 734–1409 (TMFFVNRKGH…LADYISKTYR (676 aa)) are cytoplasmic. 2 consecutive Tyrosine-protein phosphatase domains span residues 793-1072 (FAQE…LAEW) and 1135-1403 (LEEE…LADY). Residues Cys1013 and Cys1344 each act as phosphocysteine intermediate in the active site.

The protein belongs to the protein-tyrosine phosphatase family. Receptor class 2A subfamily. In terms of tissue distribution, expressed in muscles, hypodermis and a subset of neurons. Expressed in the AVA neurons, with high expression in the anterior half of the preanal ganglion where AVA neurons contact the PHB neurons.

The protein localises to the cell membrane. It is found in the synapse. It catalyses the reaction O-phospho-L-tyrosyl-[protein] + H2O = L-tyrosyl-[protein] + phosphate. In terms of biological role, possesses an intrinsic protein tyrosine phosphatase (PTPase) activity. Regulates egl-15 activity which is required for hypodermis-mediated fluid homeostasis and protein degradation in muscle. During the formation of neuromuscular junctions at the larval stage, negatively regulates membrane protrusion from body wall muscles. Plays a role in nicotinic acetylcholine receptor (nAChR)-mediated sensitivity to nicotine. Regulates synaptic levels of nAchR subunit lev-1 in the nerve cord. Promotes the outgrowth of the quaternary dendritic branches of the PVD sensory neurons. In parallel to the sax-7/mnr-1 pathway, also controls the extension of the PVD primary branches. Acts in the netrin/DCC pathway to mediate the formation of synapses between the AVA interneurons and the PHB sensory neurons. Also required for the formation of synapses between the AVA interneurons and the VA10 motor neurons. This is Receptor-type tyrosine-protein phosphatase from Caenorhabditis elegans.